A 267-amino-acid polypeptide reads, in one-letter code: Cilia- and flagella-associated protein 300 (267 aa).

Belongs to the CFAP300 family.

It is found in the cytoplasm. It localises to the cytoskeleton. The protein localises to the cilium axoneme. Its function is as follows. Cilium- and flagellum-specific protein that plays a role in axonemal structure organization and motility. May play a role in outer and inner dynein arm assembly. The sequence is that of Cilia- and flagella-associated protein 300 from Xenopus tropicalis (Western clawed frog).